The primary structure comprises 822 residues: Nucleolar complex protein 3 (822 aa).

3 disordered regions span residues 1–86, 106–142, and 172–199; these read MGTK…DGDD, ANKRKRKAKTTGENDPDQGQSIGLERAYASDTKKEQD, and KPKQKKKNEEEEEDDSEEDGDTEYEDSD. Positions 13-23 are enriched in basic residues; sequence RAAHLKSKKTP. Over residues 35–45 the composition is skewed to basic and acidic residues; sequence KRDQLKSKREQ. The Nuclear localization signal motif lies at 41 to 48; it reads SKREQGQN. The segment covering 76 to 86 has biased composition (acidic residues); that stretch reads PLEEDNEDGDD. Polar residues predominate over residues 116-126; it reads TGENDPDQGQS. A compositionally biased stretch (acidic residues) spans 181 to 199; it reads EEEEDDSEEDGDTEYEDSD. The residue at position 187 (S187) is a Phosphoserine. At T193 the chain carries Phosphothreonine. At S198 the chain carries Phosphoserine. Positions 445 to 509 form a coiled coil; it reads KIKNVNLDAE…NKQAKHQKLT (65 aa).

Belongs to the CBF/MAK21 family.

It is found in the nucleus. It localises to the nucleolus. The chain is Nucleolar complex protein 3 from Drosophila melanogaster (Fruit fly).